The chain runs to 1247 residues: Protein jagged-2 (1247 aa).

Positions 1 to 23 (MRARGWGRLPRRLLLLLVLCVQA) are cleaved as a signal peptide. Over 24 to 1082 (TRPMGYFELQ…ETVVMGGSST (1059 aa)) the chain is Extracellular. A glycan (N-linked (GlcNAc...) asparagine) is linked at Asn153. The DSL domain maps to 196–240 (VRCDENYYSATCNKFCRPRNDFFGHYTCDQYGNKACMDGWMGKEC). Intrachain disulfides connect Cys198–Cys207, Cys211–Cys223, Cys231–Cys240, Cys245–Cys256, Cys249–Cys262, Cys264–Cys273, Cys276–Cys287, Cys282–Cys293, Cys295–Cys304, Cys311–Cys323, Cys317–Cys333, Cys335–Cys344, Cys351–Cys362, Cys356–Cys371, Cys373–Cys382, Cys389–Cys400, Cys394–Cys409, Cys411–Cys420, Cys427–Cys438, Cys432–Cys447, Cys449–Cys458, Cys465–Cys475, Cys469–Cys484, Cys486–Cys495, Cys502–Cys513, Cys507–Cys522, Cys524–Cys533, Cys540–Cys551, Cys545–Cys560, Cys562–Cys571, Cys589–Cys612, Cys606–Cys622, Cys624–Cys633, Cys640–Cys651, Cys645–Cys660, Cys662–Cys671, Cys678–Cys689, Cys683–Cys698, Cys700–Cys709, Cys716–Cys727, Cys721–Cys736, and Cys738–Cys747. One can recognise an EGF-like 1 domain in the interval 241 to 274 (KEAVCKQGCNLLHGGCTVPGECRCSYGWQGKFCD). Residues 275–305 (ECVPYPGCVHGSCVEPWHCDCETNWGGLLCD) form the EGF-like 2; atypical domain. EGF-like domains lie at 307–345 (DLNY…KNCE) and 347–383 (AEHA…PTCA). Residues 385–421 (DIDECASNPCAAGGTCVDQVDGFECICPEQWVGATCQ) form the EGF-like 5; calcium-binding domain. In terms of domain architecture, EGF-like 6; calcium-binding spans 423–459 (DANECEGKPCLNAFSCKNLIGGYYCDCLPGWKGINCQ). The region spanning 461–496 (NINDCHGQCQHGGTCKDLVNGYQCVCPRGFGGRHCE) is the EGF-like 7; calcium-binding domain. 2 consecutive EGF-like domains span residues 498 to 534 (EYDK…LHCE) and 536 to 572 (DMDL…KNCS). An N-linked (GlcNAc...) asparagine glycan is attached at Asn570. The EGF-like 10; atypical domain maps to 574-634 (PRDTCPGGAC…DSGFTGTYCH (61 aa)). The N-linked (GlcNAc...) asparagine glycan is linked to Asn619. In terms of domain architecture, EGF-like 11; calcium-binding spans 636 to 672 (NIDDCMGQPCRNGGTCIDEVDSFRCFCPSGWEGELCD). An EGF-like 12; calcium-binding domain is found at 674-710 (NPNDCLPDPCHSRGRCYDLVNDFYCACDDGWKGKTCH). 2 consecutive EGF-like domains span residues 712 to 748 (REFQ…STCT) and 751 to 787 (KNSS…RTCT). The N-linked (GlcNAc...) asparagine glycan is linked to Asn752. 9 disulfides stabilise this stretch: Cys755–Cys766, Cys760–Cys775, Cys777–Cys786, Cys793–Cys804, Cys798–Cys813, Cys815–Cys824, Cys831–Cys842, Cys836–Cys851, and Cys853–Cys862. An EGF-like 15; calcium-binding domain is found at 789-825 (NTNDCNPLPCYNGGICVDGVNWFRCECAPGFAGPDCR). Residues 827–863 (NIDECQSSPCAYGATCVDEINGYRCSCPPGRSGPRCQ) enclose the EGF-like 16; calcium-binding domain. N-linked (GlcNAc...) asparagine glycosylation is present at Asn1060. A helical membrane pass occupies residues 1083 to 1103 (GLLVPVLCSVFSVLWLACVVI). The Cytoplasmic portion of the chain corresponds to 1104 to 1247 (CVWWTRKRRK…TKDVRRAGRE (144 aa)). Composition is skewed to basic and acidic residues over residues 1115–1125 (RERSRLPRDES), 1192–1212 (LSRG…KFTK), and 1230–1247 (VDNR…AGRE). Disordered regions lie at residues 1115-1148 (RERS…GSGL) and 1167-1247 (PRRA…AGRE). Phosphoserine is present on Ser1125.

In terms of tissue distribution, found to be highest in fetal thymus, epidermis, foregut dorsal root ganglia and inner ear. In 2-weeK-old mice, abundant in heart, lung, thymus, skeletal muscle, brain and testis. Expression overlaps partially with Notch1 expression.

It is found in the membrane. Its function is as follows. Putative Notch ligand involved in the mediation of Notch signaling. Plays an essential role during limb, craniofacial and thymic development. May be involved in myogenesis and in the development of peripheral and central nervous systems. This is Protein jagged-2 (Jag2) from Mus musculus (Mouse).